Here is a 439-residue protein sequence, read N- to C-terminus: GTPase Obg (439 aa).

The region spanning 5-164 is the Obg domain; sequence TDFFDQATIV…LTLELELKML (160 aa). Residues 165 to 335 enclose the OBG-type G domain; it reads ADVGLVGFPN…LLQRVAELLR (171 aa). GTP is bound by residues 171–178, 196–200, 217–220, 287–290, and 316–318; these read GFPNAGKS, FTTLT, DIPG, NKAD, and SAA. Mg(2+) contacts are provided by S178 and T198. The interval 337 to 359 is disordered; sequence DPPPQRDPVDPDEPPLEWPLPPV. The OCT domain maps to 356–433; that stretch reads LPPVDENAFT…IGRAELVWDD (78 aa).

The protein belongs to the TRAFAC class OBG-HflX-like GTPase superfamily. OBG GTPase family. Monomer. It depends on Mg(2+) as a cofactor.

It is found in the cytoplasm. An essential GTPase which binds GTP, GDP and possibly (p)ppGpp with moderate affinity, with high nucleotide exchange rates and a fairly low GTP hydrolysis rate. Plays a role in control of the cell cycle, stress response, ribosome biogenesis and in those bacteria that undergo differentiation, in morphogenesis control. The protein is GTPase Obg of Chloroflexus aggregans (strain MD-66 / DSM 9485).